The primary structure comprises 33 residues: RNA-directed RNA polymerase beta chain (33 aa).

In terms of assembly, the polymerase complex is composed of four chains, the three other proteins of the complex (alpha, gamma, and delta chains) are supplied by the host cell.

The enzyme catalyses RNA(n) + a ribonucleoside 5'-triphosphate = RNA(n+1) + diphosphate. In terms of biological role, this enzyme is part of the viral RNA-dependent RNA polymerase complex. This Escherichia phage BZ13 (Bacteriophage BZ13) protein is RNA-directed RNA polymerase beta chain.